The chain runs to 142 residues: Transcriptional regulator MraZ (142 aa).

SpoVT-AbrB domains are found at residues 5-51 and 77-120; these read ASAL…PRPE and AMDV…DSQT.

Belongs to the MraZ family. Forms oligomers.

It is found in the cytoplasm. Its subcellular location is the nucleoid. The protein is Transcriptional regulator MraZ of Burkholderia multivorans (strain ATCC 17616 / 249).